The sequence spans 191 residues: MRIGANGDETVWADEEFAGRDFRDEDLSRIRTERVVFTECDFSGVDLSESEHHGSAFRNCTFRRSTIWHSTFTNCSLLGSVFTECRIRPVTFVECDFTLAVLGGCDLRAVDLSDCRLREVSLVGADLRKAVLRRADLTGSRVQDARLEEADLRGTRVDPTFWTTAKVRGAKIDIEQALAYAAAHGLAVHGG.

Residues Cys-115–Gly-154 form the Pentapeptide repeat domain.

Belongs to the pentapeptide repeat protein family. Homodimer. Probably interacts with DNA gyrase.

Its function is as follows. When present on multicopy plasmids confers increased resistance to fluoroquinolone antibiotics such as ciprofloxacin and sparfloxacin but not the quinolone nalidixic acid. Forms a structure that exhibits size, shape and electrostatic similarity to B-form DNA; it may bind to DNA gyrase which is postulated to protect it from fluoroquinolones. This is Pentapeptide repeat protein MfpA from Mycolicibacterium smegmatis (strain ATCC 700084 / mc(2)155) (Mycobacterium smegmatis).